Consider the following 651-residue polypeptide: Probable export ATP-binding/permease protein Pfl01_2215 (651 aa).

In terms of domain architecture, ABC transporter spans 6–244 (LQLTGISRSF…LSNEDAVPKS (239 aa)). 42 to 49 (GASGSGKS) is an ATP binding site. The next 5 membrane-spanning stretches (helical) occupy residues 250–270 (LVAS…ALIS), 276–296 (LLTM…SAIG), 524–544 (LALL…IGVM), 585–605 (LGGA…SLFI), and 614–634 (LTSV…FGFV).

It belongs to the ABC transporter superfamily. Macrolide exporter (TC 3.A.1.122) family. As to quaternary structure, probably part of a tripartite efflux system, which is composed of an inner membrane transporter, a periplasmic membrane fusion protein, and an outer membrane component.

The protein resides in the cell inner membrane. Probably part of a tripartite efflux system. This Pseudomonas fluorescens (strain Pf0-1) protein is Probable export ATP-binding/permease protein Pfl01_2215.